The primary structure comprises 225 residues: Fibroblast growth factor 11 (225 aa).

Residues 1–28 (MAALASSLIRQKREVREPGGSRPVSAQR) are disordered.

This sequence belongs to the heparin-binding growth factors family. Brain and eye, and in a segmental pattern of the embryonic body wall. In adult olfactory bulb, hippocampus and most concentrated in Purkinje cell layer of the cerebellum.

It is found in the nucleus. Functionally, probably involved in nervous system development and function. The chain is Fibroblast growth factor 11 (Fgf11) from Mus musculus (Mouse).